A 311-amino-acid polypeptide reads, in one-letter code: Aspartate carbamoyltransferase catalytic subunit (311 aa).

Residues Arg58 and Thr59 each contribute to the carbamoyl phosphate site. Lys86 is an L-aspartate binding site. Residues Arg108, His136, and Gln139 each contribute to the carbamoyl phosphate site. Arg169 and Arg223 together coordinate L-aspartate. Carbamoyl phosphate-binding residues include Gly264 and Pro265.

The protein belongs to the aspartate/ornithine carbamoyltransferase superfamily. ATCase family. As to quaternary structure, heterododecamer (2C3:3R2) of six catalytic PyrB chains organized as two trimers (C3), and six regulatory PyrI chains organized as three dimers (R2).

The catalysed reaction is carbamoyl phosphate + L-aspartate = N-carbamoyl-L-aspartate + phosphate + H(+). Its pathway is pyrimidine metabolism; UMP biosynthesis via de novo pathway; (S)-dihydroorotate from bicarbonate: step 2/3. In terms of biological role, catalyzes the condensation of carbamoyl phosphate and aspartate to form carbamoyl aspartate and inorganic phosphate, the committed step in the de novo pyrimidine nucleotide biosynthesis pathway. The chain is Aspartate carbamoyltransferase catalytic subunit from Acidiphilium cryptum (strain JF-5).